The following is a 1129-amino-acid chain: DNA-directed RNA polymerase I subunit RPA2 (1129 aa).

The C4-type zinc-finger motif lies at Cys-1061–Cys-1093.

The protein belongs to the RNA polymerase beta chain family. In terms of assembly, component of the RNA polymerase I (Pol I) complex consisting of at least 13 subunits.

It is found in the nucleus. It localises to the nucleolus. It catalyses the reaction RNA(n) + a ribonucleoside 5'-triphosphate = RNA(n+1) + diphosphate. Its function is as follows. DNA-dependent RNA polymerase catalyzes the transcription of DNA into RNA using the four ribonucleoside triphosphates as substrates. Second largest core component of RNA polymerase I which synthesizes ribosomal RNA precursors. Proposed to contribute to the polymerase catalytic activity and forms the polymerase active center together with the largest subunit. Pol I is composed of mobile elements and RPA2 is part of the core element with the central large cleft and probably a clamp element that moves to open and close the cleft. The polypeptide is DNA-directed RNA polymerase I subunit RPA2 (Drosophila melanogaster (Fruit fly)).